The chain runs to 750 residues: Serine/threonine-protein kinase GE16371 (750 aa).

Doublecortin domains follow at residues 159 to 245 (LRIK…VEYN) and 315 to 398 (RIVT…AEDF). Residues 479–737 (YTLGKIIGDG…SEDILDHYWT (259 aa)) form the Protein kinase domain. ATP is bound by residues 485–493 (IGDGNFAIV) and Lys-508. The active-site Proton acceptor is the Asp-600.

The protein belongs to the protein kinase superfamily. CAMK Ser/Thr protein kinase family. CaMK subfamily.

It catalyses the reaction L-seryl-[protein] + ATP = O-phospho-L-seryl-[protein] + ADP + H(+). It carries out the reaction L-threonyl-[protein] + ATP = O-phospho-L-threonyl-[protein] + ADP + H(+). The protein is Serine/threonine-protein kinase GE16371 of Drosophila yakuba (Fruit fly).